Reading from the N-terminus, the 388-residue chain is Putative pyridoxal phosphate-dependent aminotransferase EpsN (388 aa).

The residue at position 190 (lysine 190) is an N6-(pyridoxal phosphate)lysine.

Belongs to the DegT/DnrJ/EryC1 family. It depends on pyridoxal 5'-phosphate as a cofactor.

Its function is as follows. May be involved in the production of the exopolysaccharide (EPS) component of the extracellular matrix during biofilm formation. EPS is responsible for the adhesion of chains of cells into bundles. The sequence is that of Putative pyridoxal phosphate-dependent aminotransferase EpsN (epsN) from Bacillus subtilis (strain 168).